Reading from the N-terminus, the 613-residue chain is Metacaspase-1 (613 aa).

Residues histidine 404 and cysteine 460 contribute to the active site.

It belongs to the peptidase C14B family. Monomer.

With respect to regulation, activated by Ca(2+). Functionally, cysteine protease that cleaves specifically after arginine or lysine residues. May play a role in apoptosis. In Plasmodium falciparum (isolate 3D7), this protein is Metacaspase-1.